A 141-amino-acid polypeptide reads, in one-letter code: MTVERTFSIIKPNAVKKNAIGAIYARFESAGFKIIAAKMLHLTREQAEGFYAEHKGRPFFDGLVEFMTSGPIVVQVLEGENAVQRHRDLMGATNPDNALAGTLRADYADSFTENAVHGSDAVESANREIAYFFTEDEICPR.

ATP is bound by residues Lys-11, Phe-59, Arg-87, Thr-93, Arg-104, and Asn-114. The Pros-phosphohistidine intermediate role is filled by His-117.

This sequence belongs to the NDK family. In terms of assembly, homotetramer. It depends on Mg(2+) as a cofactor.

It is found in the cytoplasm. The catalysed reaction is a 2'-deoxyribonucleoside 5'-diphosphate + ATP = a 2'-deoxyribonucleoside 5'-triphosphate + ADP. It catalyses the reaction a ribonucleoside 5'-diphosphate + ATP = a ribonucleoside 5'-triphosphate + ADP. Functionally, major role in the synthesis of nucleoside triphosphates other than ATP. The ATP gamma phosphate is transferred to the NDP beta phosphate via a ping-pong mechanism, using a phosphorylated active-site intermediate. The chain is Nucleoside diphosphate kinase from Photorhabdus laumondii subsp. laumondii (strain DSM 15139 / CIP 105565 / TT01) (Photorhabdus luminescens subsp. laumondii).